A 160-amino-acid chain; its full sequence is Phosphopantetheine adenylyltransferase (160 aa).

Thr10 contacts substrate. ATP-binding positions include 10–11 (TF) and His18. Positions 42, 74, and 88 each coordinate substrate. ATP-binding positions include 89–91 (GLR), Glu99, and 124–130 (HGFLSST).

Belongs to the bacterial CoaD family. As to quaternary structure, homohexamer. Mg(2+) is required as a cofactor.

It localises to the cytoplasm. It carries out the reaction (R)-4'-phosphopantetheine + ATP + H(+) = 3'-dephospho-CoA + diphosphate. The protein operates within cofactor biosynthesis; coenzyme A biosynthesis; CoA from (R)-pantothenate: step 4/5. Its function is as follows. Reversibly transfers an adenylyl group from ATP to 4'-phosphopantetheine, yielding dephospho-CoA (dPCoA) and pyrophosphate. The chain is Phosphopantetheine adenylyltransferase from Aliivibrio fischeri (strain MJ11) (Vibrio fischeri).